Here is a 264-residue protein sequence, read N- to C-terminus: tRNA pseudouridine synthase A (264 aa).

Aspartate 51 acts as the Nucleophile in catalysis. Position 109 (tyrosine 109) interacts with substrate.

Belongs to the tRNA pseudouridine synthase TruA family. As to quaternary structure, homodimer.

It catalyses the reaction uridine(38/39/40) in tRNA = pseudouridine(38/39/40) in tRNA. Functionally, formation of pseudouridine at positions 38, 39 and 40 in the anticodon stem and loop of transfer RNAs. The sequence is that of tRNA pseudouridine synthase A from Actinobacillus succinogenes (strain ATCC 55618 / DSM 22257 / CCUG 43843 / 130Z).